We begin with the raw amino-acid sequence, 282 residues long: Elongation factor Ts (282 aa).

An involved in Mg(2+) ion dislocation from EF-Tu region spans residues 80 to 83 (TDFV).

The protein belongs to the EF-Ts family.

It localises to the cytoplasm. Associates with the EF-Tu.GDP complex and induces the exchange of GDP to GTP. It remains bound to the aminoacyl-tRNA.EF-Tu.GTP complex up to the GTP hydrolysis stage on the ribosome. This is Elongation factor Ts (tsf) from Chlamydia pneumoniae (Chlamydophila pneumoniae).